The sequence spans 933 residues: Probable Rho-type GTPase-activating protein 4 (933 aa).

2 LIM zinc-binding domains span residues 22-80 (CFCI…LCVD) and 81-129 (ICNG…CLPC). 2 disordered regions span residues 181–200 (PSSVLSGRMQNTSSPTNSLR) and 304–338 (ENGTLPQLPKNESVVNPPPLRRSSTMNYKSVSTTT). A compositionally biased stretch (polar residues) spans 325 to 338 (RSSTMNYKSVSTTT). Residue serine 353 is modified to Phosphoserine. Disordered regions lie at residues 415-435 (RLSSEPNGLKKRLTNSSNYEA), 605-628 (SSSFGIFNNDKKSNRTISTPSPRE), and 641-660 (GFRPKDNKDKESGGYNKRNS). The span at 619 to 628 (RTISTPSPRE) shows a compositional bias: polar residues. Serine 625 is subject to Phosphoserine. Residues 643-652 (RPKDNKDKES) show a composition bias toward basic and acidic residues. Residues serine 738 and serine 740 each carry the phosphoserine modification. Positions 753-932 (NRLTLLRVPT…FLIDHVHEVF (180 aa)) constitute a Rho-GAP domain.

Functionally, GTPase-activating protein for Rho-type proteins. This chain is Probable Rho-type GTPase-activating protein 4 (rga4), found in Schizosaccharomyces pombe (strain 972 / ATCC 24843) (Fission yeast).